A 117-amino-acid chain; its full sequence is Ig kappa chain V region 12F2 (117 aa).

The signal sequence occupies residues 1-6 (LPGARC). Residues 7–29 (AYDMTQTPASVEVAVGGTVTIKC) form a framework-1 region. Residues Cys29 and Cys86 are joined by a disulfide bond. Positions 30–40 (QASQSISTYLS) are complementarity-determining-1. A framework-2 region spans residues 41–55 (WYQQKPGQRPKLLIY). A complementarity-determining-2 region spans residues 56–62 (RASTLAS). The framework-3 stretch occupies residues 63 to 94 (GVSSRFKGSGSGTEFTLTISGVECADAATYYC). The segment at 95–106 (QQGWSSSNVENV) is complementarity-determining-3. The tract at residues 107–116 (FGGGTEVVVK) is framework-4.

The sequence is that of Ig kappa chain V region 12F2 from Oryctolagus cuniculus (Rabbit).